An 883-amino-acid chain; its full sequence is Phosphoenolpyruvate carboxylase (883 aa).

Active-site residues include H138 and K546.

The protein belongs to the PEPCase type 1 family. The cofactor is Mg(2+).

It carries out the reaction oxaloacetate + phosphate = phosphoenolpyruvate + hydrogencarbonate. Forms oxaloacetate, a four-carbon dicarboxylic acid source for the tricarboxylic acid cycle. The polypeptide is Phosphoenolpyruvate carboxylase (Klebsiella pneumoniae (strain 342)).